Consider the following 317-residue polypeptide: Acetyl-coenzyme A carboxylase carboxyl transferase subunit alpha (317 aa).

Residues 40–294 (RLQKKSEELT…KQQILADLQD (255 aa)) form the CoA carboxyltransferase C-terminal domain.

It belongs to the AccA family. As to quaternary structure, acetyl-CoA carboxylase is a heterohexamer composed of biotin carboxyl carrier protein (AccB), biotin carboxylase (AccC) and two subunits each of ACCase subunit alpha (AccA) and ACCase subunit beta (AccD).

The protein resides in the cytoplasm. It catalyses the reaction N(6)-carboxybiotinyl-L-lysyl-[protein] + acetyl-CoA = N(6)-biotinyl-L-lysyl-[protein] + malonyl-CoA. The protein operates within lipid metabolism; malonyl-CoA biosynthesis; malonyl-CoA from acetyl-CoA: step 1/1. Functionally, component of the acetyl coenzyme A carboxylase (ACC) complex. First, biotin carboxylase catalyzes the carboxylation of biotin on its carrier protein (BCCP) and then the CO(2) group is transferred by the carboxyltransferase to acetyl-CoA to form malonyl-CoA. The polypeptide is Acetyl-coenzyme A carboxylase carboxyl transferase subunit alpha (Actinobacillus pleuropneumoniae serotype 5b (strain L20)).